Here is a 632-residue protein sequence, read N- to C-terminus: Mitochondrial distribution and morphology protein 34 (632 aa).

Residues 1-203 enclose the SMP-LTD domain; it reads MSFKVNWNSL…LPTLIHQLSL (203 aa). Disordered stretches follow at residues 221–253 and 384–435; these read ANAS…TSSL and KPKR…SSTL. A compositionally biased stretch (low complexity) spans 224-252; sequence STSSSSTSSTSSSTTSSSSSSSPSSFTSS. Residues 384 to 400 show a composition bias toward basic residues; that stretch reads KPKRRVIRLGKSKNKSK. Residues 401-412 are compositionally biased toward basic and acidic residues; it reads SKTETKTEHNDE. A compositionally biased stretch (low complexity) spans 422–435; it reads PLSSTPASSSSSTL.

It belongs to the MDM34 family. As to quaternary structure, component of the ER-mitochondria encounter structure (ERMES) or MDM complex, composed of MMM1, MDM10, MDM12 and MDM34.

The protein localises to the mitochondrion outer membrane. In terms of biological role, component of the ERMES/MDM complex, which serves as a molecular tether to connect the endoplasmic reticulum (ER) and mitochondria. Components of this complex are involved in the control of mitochondrial shape and protein biogenesis, and function in nonvesicular lipid trafficking between the ER and mitochondria. MDM34 is required for the interaction of the ER-resident membrane protein MMM1 and the outer mitochondrial membrane-resident beta-barrel protein MDM10. The sequence is that of Mitochondrial distribution and morphology protein 34 from Lodderomyces elongisporus (strain ATCC 11503 / CBS 2605 / JCM 1781 / NBRC 1676 / NRRL YB-4239) (Yeast).